Reading from the N-terminus, the 397-residue chain is Serpin B10 (397 aa).

The short motif at 74 to 77 (KKRK) is the Nuclear localization signal element.

This sequence belongs to the serpin family. Ov-serpin subfamily.

The protein localises to the nucleus. It is found in the cytoplasm. In terms of biological role, protease inhibitor that may play a role in the regulation of protease activities during hematopoiesis and apoptosis induced by TNF. May regulate protease activities in the cytoplasm and in the nucleus. The chain is Serpin B10 (SERPINB10) from Rhinolophus ferrumequinum (Greater horseshoe bat).